Reading from the N-terminus, the 1079-residue chain is Carbamoyl phosphate synthase large chain (1079 aa).

Positions 2 to 403 (PKSTDIKSIL…SIQKAIRGLE (402 aa)) are carboxyphosphate synthetic domain. Residues Arg129, Arg169, Gly175, Gly176, Glu208, Leu210, Glu215, Gly241, Ile242, His243, Gln285, and Glu299 each coordinate ATP. Residues 133 to 328 (EHSMKKLNLE…IAKIAAKLAI (196 aa)) enclose the ATP-grasp 1 domain. Gln285, Glu299, and Asn301 together coordinate Mg(2+). Mn(2+) contacts are provided by Gln285, Glu299, and Asn301. The interval 404-553 (VGASGFDSKI…YSTWEDECES (150 aa)) is oligomerization domain. Residues 554 to 936 (HPSKNNKKII…AFSKSMLGAH (383 aa)) are carbamoyl phosphate synthetic domain. An ATP-grasp 2 domain is found at 679-870 (QKTVNKLRLQ…LAKISVRVMC (192 aa)). ATP-binding residues include Arg715, Gln754, Leu756, Glu761, Gly786, Val787, His788, Ser789, Gln829, and Glu841. Residues Gln829, Glu841, and Asn843 each contribute to the Mg(2+) site. 3 residues coordinate Mn(2+): Gln829, Glu841, and Asn843. The MGS-like domain occupies 937 to 1079 (TNMKKSGRVL…KKIQLFYTKK (143 aa)). The tract at residues 937 to 1079 (TNMKKSGRVL…KKIQLFYTKK (143 aa)) is allosteric domain.

Belongs to the CarB family. Composed of two chains; the small (or glutamine) chain promotes the hydrolysis of glutamine to ammonia, which is used by the large (or ammonia) chain to synthesize carbamoyl phosphate. Tetramer of heterodimers (alpha,beta)4. It depends on Mg(2+) as a cofactor. Mn(2+) is required as a cofactor.

It carries out the reaction hydrogencarbonate + L-glutamine + 2 ATP + H2O = carbamoyl phosphate + L-glutamate + 2 ADP + phosphate + 2 H(+). The enzyme catalyses hydrogencarbonate + NH4(+) + 2 ATP = carbamoyl phosphate + 2 ADP + phosphate + 2 H(+). It participates in amino-acid biosynthesis; L-arginine biosynthesis; carbamoyl phosphate from bicarbonate: step 1/1. Its pathway is pyrimidine metabolism; UMP biosynthesis via de novo pathway; (S)-dihydroorotate from bicarbonate: step 1/3. Large subunit of the glutamine-dependent carbamoyl phosphate synthetase (CPSase). CPSase catalyzes the formation of carbamoyl phosphate from the ammonia moiety of glutamine, carbonate, and phosphate donated by ATP, constituting the first step of 2 biosynthetic pathways, one leading to arginine and/or urea and the other to pyrimidine nucleotides. The large subunit (synthetase) binds the substrates ammonia (free or transferred from glutamine from the small subunit), hydrogencarbonate and ATP and carries out an ATP-coupled ligase reaction, activating hydrogencarbonate by forming carboxy phosphate which reacts with ammonia to form carbamoyl phosphate. The polypeptide is Carbamoyl phosphate synthase large chain (Buchnera aphidicola subsp. Acyrthosiphon pisum (strain APS) (Acyrthosiphon pisum symbiotic bacterium)).